We begin with the raw amino-acid sequence, 855 residues long: Suppressor of tumorigenicity 14 protein (855 aa).

The disordered stretch occupies residues 1–20 (MGSDRARKGGGGPKDFGAGL). Residues 1-55 (MGSDRARKGGGGPKDFGAGLKYNSRHEKVNGLEEGVEFLPVNNVKKVEKHGPGRW) are Cytoplasmic-facing. Residues 56–76 (VVLAAVLIGLLLVLLGIGFLV) traverse the membrane as a helical; Signal-anchor for type II membrane protein segment. Residues 77–855 (WHLQYRDVRV…RDWIKENTGV (779 aa)) are Extracellular-facing. The SEA domain maps to 86 to 203 (VQKVFNGYMR…TSVVAFPTDS (118 aa)). The N-linked (GlcNAc...) asparagine glycan is linked to Asn-109. Residues Cys-214 and Cys-244 are joined by a disulfide bond. CUB domains are found at residues 214 to 334 (CSFG…FFQL) and 340 to 447 (CGGR…YLSY). N-linked (GlcNAc...) asparagine glycosylation is present at Asn-302. Cystine bridges form between Cys-340-Cys-366, Cys-397-Cys-410, Cys-453-Cys-464, Cys-459-Cys-477, Cys-471-Cys-486, Cys-488-Cys-501, Cys-496-Cys-514, Cys-508-Cys-523, Cys-525-Cys-537, Cys-532-Cys-550, Cys-544-Cys-559, Cys-567-Cys-579, Cys-574-Cys-593, Cys-587-Cys-602, and Cys-641-Cys-657. 4 consecutive LDL-receptor class A domains span residues 452-487 (PCPGQFTCRTGRCIRKELRCDGWADCTDHSDELNCS), 487-524 (SCDAGHQFTCKNKFCKPLFWVCDSVNDCGDNSDEQGCS), 524-560 (SCPAQTFRCSNGKCLSKSQQCNGKDDCGDGSDEASCP), and 566-603 (TCTKHTYRCLNGLCLSKGNPECDGKEDCSDGSDEKDCD). Asn-485 is a glycosylation site (N-linked (GlcNAc...) asparagine). A Peptidase S1 domain is found at 615–854 (VVGGTDADEG…FRDWIKENTG (240 aa)). Residues His-656 and Asp-711 each act as charge relay system in the active site. N-linked (GlcNAc...) asparagine glycosylation is present at Asn-772. Intrachain disulfides connect Cys-776–Cys-790 and Cys-801–Cys-830. The Charge relay system role is filled by Ser-805.

Belongs to the peptidase S1 family. As to quaternary structure, interacts with CDCP1. May interact with TMEFF1. Interacts with iripin-3, a serine protease inhibitor from Ixodes ricinus saliva. Interacts with iripin-1, a serine protease inhibitor from Ixodes ricinus saliva.

The protein localises to the membrane. It catalyses the reaction Cleaves various synthetic substrates with Arg or Lys at the P1 position and prefers small side-chain amino acids, such as Ala and Gly, at the P2 position.. Functionally, exhibits trypsin-like activity as defined by cleavage of synthetic substrates with Arg or Lys as the P1 site. Involved in the terminal differentiation of keratinocytes through prostasin (PRSS8) activation and filaggrin (FLG) processing. Proteolytically cleaves and therefore activates TMPRSS13. The protein is Suppressor of tumorigenicity 14 protein (ST14) of Homo sapiens (Human).